A 214-amino-acid polypeptide reads, in one-letter code: Cell division protein SepF (214 aa).

Residues 23 to 70 are disordered; it reads YYDDRAPSRGFPRPRFDDGYGRYDGDDYDDPRREPADYPPPAGYRGGY. The span at 36 to 58 shows a compositional bias: basic and acidic residues; that stretch reads PRFDDGYGRYDGDDYDDPRREPA.

The protein belongs to the SepF family. Homodimer. Interacts with FtsZ.

It localises to the cytoplasm. Cell division protein that is part of the divisome complex and is recruited early to the Z-ring. Probably stimulates Z-ring formation, perhaps through the cross-linking of FtsZ protofilaments. Its function overlaps with FtsA. The protein is Cell division protein SepF of Mycobacterium avium (strain 104).